A 280-amino-acid chain; its full sequence is 4-deoxy-L-threo-5-hexosulose-uronate ketol-isomerase (280 aa).

Zn(2+) is bound by residues His-198, His-200, Glu-205, and His-247.

Belongs to the KduI family. Requires Zn(2+) as cofactor.

Its subcellular location is the cytoplasm. It carries out the reaction 5-dehydro-4-deoxy-D-glucuronate = 3-deoxy-D-glycero-2,5-hexodiulosonate. Isomerase involved in ulvan degradation. Ulvan is the main polysaccharide component of the Ulvales (green seaweed) cell wall. It is composed of disaccharide building blocks comprising 3-sulfated rhamnose (Rha3S) linked to D-glucuronic acid (GlcA), L-iduronic acid (IduA), or D-xylose (Xyl). Catalyzes the isomerization of 5-dehydro-4-deoxy-D-glucuronate to 3-deoxy-D-glycero-2,5-hexodiulosonate. The polypeptide is 4-deoxy-L-threo-5-hexosulose-uronate ketol-isomerase (Formosa agariphila (strain DSM 15362 / KCTC 12365 / LMG 23005 / KMM 3901 / M-2Alg 35-1)).